The sequence spans 187 residues: Corticoliberin (187 aa).

Positions 1-24 are cleaved as a signal peptide; sequence MRLRLLVSAGMLLVALSPCLPCRA. Residues 25 to 144 constitute a propeptide that is removed on maturation; it reads LLSRGSVSGA…HQGALERERR (120 aa). A disordered region spans residues 75-95; the sequence is AARLSPNSTPLTAGRGSRPSH. An Isoleucine amide modification is found at I185.

This sequence belongs to the sauvagine/corticotropin-releasing factor/urotensin I family. As to quaternary structure, interacts (via C-terminus) with CRFR1 (via N-terminal extracellular domain). As to expression, produced by the hypothalamus.

It is found in the secreted. Its function is as follows. Hormone regulating the release of corticotropin from pituitary gland. Induces NLRP6 in intestinal epithelial cells, hence may influence gut microbiota profile. The chain is Corticoliberin (Crh) from Rattus norvegicus (Rat).